We begin with the raw amino-acid sequence, 538 residues long: uncharacterized protein (538 aa).

The span at 1 to 13 (MYNNNSSTSSDSS) shows a compositional bias: low complexity. The segment at 1-43 (MYNNNSSTSSDSSNSEEKANAQHASSTDSTSEHTDPAVADEGF) is disordered. 12 consecutive transmembrane segments (helical) span residues 97-117 (ILHV…SSVF), 134-154 (VALL…ILWA), 163-183 (KIPL…VAVA), 194-214 (FFSG…FADM), 226-246 (IFAC…GFLA), 254-274 (WTEY…LFMK), 328-348 (PIVF…YLLL), 367-387 (ALPY…IAYF), 408-428 (LPPM…LAWS), 434-454 (VHWI…LTIF), 458-478 (LIYL…ANTI), and 504-524 (GSLL…FFIF).

This sequence belongs to the major facilitator superfamily. CAR1 family.

It is found in the endoplasmic reticulum. The protein resides in the membrane. This is an uncharacterized protein from Schizosaccharomyces pombe (strain 972 / ATCC 24843) (Fission yeast).